The following is a 479-amino-acid chain: Aspartyl/glutamyl-tRNA(Asn/Gln) amidotransferase subunit B (479 aa).

The protein belongs to the GatB/GatE family. GatB subfamily. Heterotrimer of A, B and C subunits.

It catalyses the reaction L-glutamyl-tRNA(Gln) + L-glutamine + ATP + H2O = L-glutaminyl-tRNA(Gln) + L-glutamate + ADP + phosphate + H(+). It carries out the reaction L-aspartyl-tRNA(Asn) + L-glutamine + ATP + H2O = L-asparaginyl-tRNA(Asn) + L-glutamate + ADP + phosphate + 2 H(+). Functionally, allows the formation of correctly charged Asn-tRNA(Asn) or Gln-tRNA(Gln) through the transamidation of misacylated Asp-tRNA(Asn) or Glu-tRNA(Gln) in organisms which lack either or both of asparaginyl-tRNA or glutaminyl-tRNA synthetases. The reaction takes place in the presence of glutamine and ATP through an activated phospho-Asp-tRNA(Asn) or phospho-Glu-tRNA(Gln). The sequence is that of Aspartyl/glutamyl-tRNA(Asn/Gln) amidotransferase subunit B from Streptococcus mutans serotype c (strain ATCC 700610 / UA159).